We begin with the raw amino-acid sequence, 216 residues long: Probable calcium-binding protein CML35 (216 aa).

Residues 18–58 (TKSKASVSRSEPSSFSSNASSSSSDGSYGNLKQGPTATPIS) are disordered. Residues 23 to 44 (SVSRSEPSSFSSNASSSSSDGS) are compositionally biased toward low complexity. 4 consecutive EF-hand domains span residues 66 to 101 (DFYT…LSHE), 103 to 138 (PSQE…TSGE), 141 to 176 (VETE…IGDE), and 178 to 213 (CTLE…AMND). Aspartate 79, aspartate 81, aspartate 83, and aspartate 90 together coordinate Ca(2+). Residues aspartate 154, aspartate 156, asparagine 158, lysine 160, glutamate 165, aspartate 191, asparagine 193, aspartate 195, and aspartate 202 each contribute to the Ca(2+) site.

Functionally, potential calcium sensor. This chain is Probable calcium-binding protein CML35 (CML35), found in Arabidopsis thaliana (Mouse-ear cress).